Consider the following 45-residue polypeptide: Thymosin beta-15A (45 aa).

Basic and acidic residues-rich tracts occupy residues 1–27 and 35–45; these read MSDK…EEKN and IQQEKECVQTS. The segment at 1–45 is disordered; sequence MSDKPDLSEVEKFDRSKLKKTNTEEKNTLPSKETIQQEKECVQTS.

The protein belongs to the thymosin beta family. Neuroblastoma-specific.

Its subcellular location is the cytoplasm. It localises to the cytoskeleton. Functionally, plays an important role in the organization of the cytoskeleton. Binds to and sequesters actin monomers (G actin) and therefore inhibits actin polymerization. In Homo sapiens (Human), this protein is Thymosin beta-15A (TMSB15A).